The chain runs to 987 residues: UPF0182 protein Lxx09300 (987 aa).

The next 7 helical transmembrane spans lie at 17-37 (VWTT…FAGL), 59-79 (AAIA…WVVI), 108-128 (RLAM…SAAS), 167-187 (VGFA…TCYL), 206-226 (VQIS…VWLD), 256-276 (AVLA…AFTG), and 283-303 (VGTA…PWAI). 2 disordered regions span residues 700–719 (RDDA…DPTL) and 886–947 (TAGD…ALQQ). Residues 705-719 (TTPNDPTSSPTDPTL) are compositionally biased toward low complexity. Positions 897-932 (GGSGGGSSGDAGSSAGGGSSGGGGSSAGGSSSGSGS) are enriched in gly residues. The span at 933–947 (SGTQSNAALQRALQQ) shows a compositional bias: low complexity.

The protein belongs to the UPF0182 family.

It is found in the cell membrane. The polypeptide is UPF0182 protein Lxx09300 (Leifsonia xyli subsp. xyli (strain CTCB07)).